Consider the following 167-residue polypeptide: Signal peptidase complex catalytic subunit SEC11 (167 aa).

The Cytoplasmic segment spans residues 1 to 12 (MNLRLELTRFLK). A helical; Signal-anchor for type II membrane protein membrane pass occupies residues 13–30 (LCFVLSSAFMFWKGLSIA). Residues 31–167 (TNSHSPIVVV…LGISALLSNE (137 aa)) lie on the Lumenal side of the membrane. Catalysis depends on charge relay system residues Ser-44, His-83, and Asp-109. The segment at 153–164 (ALMGFLGISALL) is C-terminal short (CTS) helix.

Belongs to the peptidase S26B family. As to quaternary structure, component of the signal peptidase complex (SPC) composed of a catalytic subunit SEC11 and three accessory subunits SPC1, SPC2 and SPC3. The complex induces a local thinning of the ER membrane which is used to measure the length of the signal peptide (SP) h-region of protein substrates. This ensures the selectivity of the complex towards h-regions shorter than 18-20 amino acids. SPC associates with the translocon complex.

It localises to the endoplasmic reticulum membrane. The enzyme catalyses Cleavage of hydrophobic, N-terminal signal or leader sequences from secreted and periplasmic proteins.. Its function is as follows. Catalytic component of the signal peptidase complex (SPC) which catalyzes the cleavage of N-terminal signal sequences from nascent proteins as they are translocated into the lumen of the endoplasmic reticulum. Specifically cleaves N-terminal signal peptides that contain a hydrophobic alpha-helix (h-region) shorter than 18-20 amino acids. This is Signal peptidase complex catalytic subunit SEC11 (SEC11) from Zygosaccharomyces rouxii (strain ATCC 2623 / CBS 732 / NBRC 1130 / NCYC 568 / NRRL Y-229).